A 205-amino-acid polypeptide reads, in one-letter code: Adenylyl-sulfate kinase (205 aa).

An ATP-binding site is contributed by 31–38 (GLSGSGKS). The active-site Phosphoserine intermediate is the Ser105.

The protein belongs to the APS kinase family.

It carries out the reaction adenosine 5'-phosphosulfate + ATP = 3'-phosphoadenylyl sulfate + ADP + H(+). Its pathway is sulfur metabolism; hydrogen sulfide biosynthesis; sulfite from sulfate: step 2/3. Catalyzes the synthesis of activated sulfate. The polypeptide is Adenylyl-sulfate kinase (Shewanella pealeana (strain ATCC 700345 / ANG-SQ1)).